Here is a 361-residue protein sequence, read N- to C-terminus: Basic helix-loop-helix protein 79 (361 aa).

The tract at residues 66–159 (APEASNGSGS…ASTVTAGQKT (94 aa)) is disordered. The span at 124–138 (GRPERARPGAKKKAE) shows a compositional bias: basic and acidic residues. Residues 146 to 157 (PATSASTVTAGQ) are compositionally biased toward polar residues. A Nuclear localization signal motif is present at residues 166–173 (ARRGQATD). Residues 170-183 (QATDSHSLAERVRR) form a basic motif; degenerate region. One can recognise a bHLH domain in the interval 170 to 220 (QATDSHSLAERVRRERISERMRYLQELVPGCNKVTGKAGMLDEIINYVQSL). The helix-loop-helix motif stretch occupies residues 184 to 220 (ERISERMRYLQELVPGCNKVTGKAGMLDEIINYVQSL).

This sequence belongs to the bHLH protein family. Homodimer. Interacts with IBH1.

Its subcellular location is the nucleus. In terms of biological role, together with BCL1, positive regulator of cell elongation at least partially through increased gibberellic acid (GA) biosynthesis. This is Basic helix-loop-helix protein 79 from Oryza sativa subsp. indica (Rice).